The following is a 382-amino-acid chain: tRNA-specific 2-thiouridylase MnmA (382 aa).

Residues 18 to 25 (AMSGGVDS) and Leu-44 each bind ATP. Cys-112 (nucleophile) is an active-site residue. Cys-112 and Cys-209 are disulfide-bonded. Gly-136 provides a ligand contact to ATP. The interaction with tRNA stretch occupies residues 159 to 161 (RDQ). Cys-209 acts as the Cysteine persulfide intermediate in catalysis.

This sequence belongs to the MnmA/TRMU family.

The protein localises to the cytoplasm. The enzyme catalyses S-sulfanyl-L-cysteinyl-[protein] + uridine(34) in tRNA + AH2 + ATP = 2-thiouridine(34) in tRNA + L-cysteinyl-[protein] + A + AMP + diphosphate + H(+). Functionally, catalyzes the 2-thiolation of uridine at the wobble position (U34) of tRNA, leading to the formation of s(2)U34. The polypeptide is tRNA-specific 2-thiouridylase MnmA (Methylobacterium nodulans (strain LMG 21967 / CNCM I-2342 / ORS 2060)).